Reading from the N-terminus, the 417-residue chain is Gamma-glutamyl phosphate reductase (417 aa).

This sequence belongs to the gamma-glutamyl phosphate reductase family.

It is found in the cytoplasm. The catalysed reaction is L-glutamate 5-semialdehyde + phosphate + NADP(+) = L-glutamyl 5-phosphate + NADPH + H(+). The protein operates within amino-acid biosynthesis; L-proline biosynthesis; L-glutamate 5-semialdehyde from L-glutamate: step 2/2. In terms of biological role, catalyzes the NADPH-dependent reduction of L-glutamate 5-phosphate into L-glutamate 5-semialdehyde and phosphate. The product spontaneously undergoes cyclization to form 1-pyrroline-5-carboxylate. The protein is Gamma-glutamyl phosphate reductase of Escherichia coli O127:H6 (strain E2348/69 / EPEC).